A 118-amino-acid chain; its full sequence is Protein TusC (118 aa).

Belongs to the DsrF/TusC family. As to quaternary structure, heterohexamer, formed by a dimer of trimers. The hexameric TusBCD complex contains 2 copies each of TusB, TusC and TusD. The TusBCD complex interacts with TusE.

The protein localises to the cytoplasm. In terms of biological role, part of a sulfur-relay system required for 2-thiolation of 5-methylaminomethyl-2-thiouridine (mnm(5)s(2)U) at tRNA wobble positions. This is Protein TusC from Salmonella typhi.